A 185-amino-acid polypeptide reads, in one-letter code: MTASQEPVDQAPESNEPAPAVPATVEALQAELAAVRAELEAAQATVAGQQEQVLRARADAENVRRRAQEDVSKARKFGIESFAESLVPVKDSLEAALAQPDQTLEALREGVEVTLKQLTGAFERNLLKEIAPAQGDKFDPHLHQAISSVPSDQPANTVAQLLQKGYAIADRTLRPALVIVSAGQA.

Residues 1–22 form a disordered region; that stretch reads MTASQEPVDQAPESNEPAPAVP.

This sequence belongs to the GrpE family. In terms of assembly, homodimer.

It is found in the cytoplasm. Functionally, participates actively in the response to hyperosmotic and heat shock by preventing the aggregation of stress-denatured proteins, in association with DnaK and GrpE. It is the nucleotide exchange factor for DnaK and may function as a thermosensor. Unfolded proteins bind initially to DnaJ; upon interaction with the DnaJ-bound protein, DnaK hydrolyzes its bound ATP, resulting in the formation of a stable complex. GrpE releases ADP from DnaK; ATP binding to DnaK triggers the release of the substrate protein, thus completing the reaction cycle. Several rounds of ATP-dependent interactions between DnaJ, DnaK and GrpE are required for fully efficient folding. This Bordetella petrii (strain ATCC BAA-461 / DSM 12804 / CCUG 43448) protein is Protein GrpE.